The chain runs to 259 residues: Succinate dehydrogenase iron-sulfur subunit (259 aa).

The region spanning 28–119 is the 2Fe-2S ferredoxin-type domain; that stretch reads RRFNIYRWDP…DVNIYPLPHM (92 aa). Residues Cys-80, Cys-85, and Cys-100 each contribute to the [2Fe-2S] cluster site. Residues 160 to 190 form the 4Fe-4S ferredoxin-type domain; it reads DRKKLDGLYECVMCASCSTACPSYWWNGDRY. Residues Cys-170, Cys-173, and Cys-176 each contribute to the [4Fe-4S] cluster site. Cys-180 is a binding site for [3Fe-4S] cluster. Trp-185 serves as a coordination point for a ubiquinone. The [3Fe-4S] cluster site is built by Cys-227 and Cys-233. Residue Cys-237 coordinates [4Fe-4S] cluster.

Belongs to the succinate dehydrogenase/fumarate reductase iron-sulfur protein family. Part of an enzyme complex containing four subunits: a flavoprotein, an iron-sulfur, cytochrome b-556, and a hydrophobic anchor protein. The cofactor is [2Fe-2S] cluster. Requires [3Fe-4S] cluster as cofactor. It depends on [4Fe-4S] cluster as a cofactor.

It catalyses the reaction a quinone + succinate = fumarate + a quinol. It functions in the pathway carbohydrate metabolism; tricarboxylic acid cycle; fumarate from succinate (bacterial route): step 1/1. The polypeptide is Succinate dehydrogenase iron-sulfur subunit (sdhB) (Paracoccus denitrificans).